Consider the following 556-residue polypeptide: uncharacterized protein (556 aa).

Disordered regions lie at residues 1 to 40, 80 to 243, 278 to 324, 363 to 391, and 422 to 525; these read MSNS…TNEN, NTTQ…KQSW, YDSD…SSLP, RTKQ…KFVD, and DSKQ…ENSA. Over residues 7–25 the composition is skewed to low complexity; sequence NNNNNTNNNNNNNNNNNGN. Positions 30–40 are enriched in acidic residues; it reads EEPDDDSTNEN. 2 stretches are compositionally biased toward low complexity: residues 80–133 and 164–181; these read NTTQ…GTRS and NDNN…NDSN. Acidic residues predominate over residues 182-192; it reads IVDDDEDEEEF. The segment covering 207–226 has biased composition (low complexity); the sequence is STSSPSSTSSPIVSPQTQTS. Positions 227-243 are enriched in polar residues; that stretch reads KLESSMDVSPSSGKQSW. Composition is skewed to low complexity over residues 292–322, 369–388, and 425–525; these read NNSS…NSSS, KVQQ…NNNK, and QQNV…ENSA. Residues 528-548 traverse the membrane as a helical segment; the sequence is GSFIKNAVIFIFILLLMVVGF.

It localises to the membrane. This is an uncharacterized protein from Dictyostelium discoideum (Social amoeba).